Consider the following 347-residue polypeptide: O-methyltransferase aunE (347 aa).

W166 is a binding site for S-adenosyl-L-methionine. Residue H265 is the Proton acceptor of the active site.

It belongs to the class I-like SAM-binding methyltransferase superfamily. Cation-independent O-methyltransferase family.

It participates in secondary metabolite biosynthesis. In terms of biological role, O-methyltransferase; part of the gene cluster that mediates the biosynthesis of aurasperone B, a dimeric gamma-naphthopyrone. The first step in the biosynthesis of aurasperone B is the production of gamma-naphthopyrone precursor YWA1 by the non-reducing polyketide synthase albA, via condensation of one acetyl-CoA starter unit with 6 malonyl-CoA units. YWA1 is then methylated by aunE at position C-6 to yield foncesin which is further methylated at position C-8 by aunD to produce fonsecin B. A key enzyme in the biosynthetic pathway is the cytochrome P450 monooxygenase aunB which catalyzes the oxidative dimerization of fonsecin B to aurasperone B. AunB also catalyzes the oxidative dimerization of rubrofusarin B into aurasperone A. This Aspergillus niger (strain ATCC 1015 / CBS 113.46 / FGSC A1144 / LSHB Ac4 / NCTC 3858a / NRRL 328 / USDA 3528.7) protein is O-methyltransferase aunE.